Here is a 155-residue protein sequence, read N- to C-terminus: Myosin light chain alkali (155 aa).

2 EF-hand domains span residues 7–41 (REVE…LNLN) and 80–115 (GCYE…LGES).

As to quaternary structure, myosin is a hexamer of 2 heavy chains and 4 light chains. As to expression, indirect flight muscle isoform is found only in the indirect flight muscles. The larval and adult isoform is present in the larval and adult musculature.

In Drosophila melanogaster (Fruit fly), this protein is Myosin light chain alkali (Mlc1).